A 269-amino-acid polypeptide reads, in one-letter code: MSDVPGIVVTGGSGRMGRMLIETVRGSDAARLVGVTERPGHDWIGADIGVALGGAAIGVTVTDDPLEAFATAQAVIDFTSPAATVAHAELTAQARAVHVIGTTGFSPADLAHLEAAARHAVIVRAGNMSLGVNLLVKLTEKVAAALDADYDIEVIEAHHRHKVDAPSGTALMLGEAAAAGRGVALADVSDRGRDGITGERKRGDIGFSAIRGGDIVGEHDVLFAAEGERITLRHVASDRSVFARGALKAALWGQDKGPGAYDMMDVLGL.

Residues 11–16 (GGSGRM) and glutamate 37 each bind NAD(+). NADP(+) is bound at residue arginine 38. NAD(+) is bound by residues 101-103 (GTT) and 125-128 (AGNM). The active-site Proton donor/acceptor is histidine 158. Residue histidine 159 coordinates (S)-2,3,4,5-tetrahydrodipicolinate. The Proton donor role is filled by lysine 162. 168 to 169 (GT) lines the (S)-2,3,4,5-tetrahydrodipicolinate pocket.

Belongs to the DapB family.

It is found in the cytoplasm. It carries out the reaction (S)-2,3,4,5-tetrahydrodipicolinate + NAD(+) + H2O = (2S,4S)-4-hydroxy-2,3,4,5-tetrahydrodipicolinate + NADH + H(+). The enzyme catalyses (S)-2,3,4,5-tetrahydrodipicolinate + NADP(+) + H2O = (2S,4S)-4-hydroxy-2,3,4,5-tetrahydrodipicolinate + NADPH + H(+). Its pathway is amino-acid biosynthesis; L-lysine biosynthesis via DAP pathway; (S)-tetrahydrodipicolinate from L-aspartate: step 4/4. Functionally, catalyzes the conversion of 4-hydroxy-tetrahydrodipicolinate (HTPA) to tetrahydrodipicolinate. This is 4-hydroxy-tetrahydrodipicolinate reductase from Dinoroseobacter shibae (strain DSM 16493 / NCIMB 14021 / DFL 12).